Reading from the N-terminus, the 237-residue chain is Concanavalin-Br (237 aa).

Residues Glu8 and Asp10 each contribute to the Mn(2+) site. The Ca(2+) site is built by Asp10, Tyr12, Asn14, and Asp19. Tyr12 provides a ligand contact to a carbohydrate. The Mn(2+) site is built by Asp19, His24, and Ser34. 99–100 (LY) serves as a coordination point for a carbohydrate. Residue Asp208 participates in Ca(2+) binding. Arg228 is an a carbohydrate binding site.

Belongs to the leguminous lectin family. Homotetramer.

Functionally, glucose/D-mannose specific lectin. Has anti-inflammatory activity in rats. Induces histamine release in mast cells from hamster and rat. Induces lymphocyte proliferation and IFNG production. Shows toxicity against the aquatic snail B.glabrata at concentrations higher than 20 ug/ml. This Canavalia brasiliensis (Brazilian jack bean) protein is Concanavalin-Br.